The primary structure comprises 379 residues: Putative zinc metalloprotease BMEI0829 (379 aa).

His33 contributes to the Zn(2+) binding site. Glu34 is an active-site residue. His37 is a Zn(2+) binding site. Helical transmembrane passes span 39 to 61 (LVAR…ELLG), 122 to 144 (VFAG…FALY), 305 to 327 (FDWL…LFPL), and 355 to 377 (IFYR…NDLF). The 76-residue stretch at 133–208 (TIAIFSVFFA…LNFTVERDGK (76 aa)) folds into the PDZ domain.

Belongs to the peptidase M50B family. Zn(2+) serves as cofactor.

It localises to the cell inner membrane. This chain is Putative zinc metalloprotease BMEI0829, found in Brucella melitensis biotype 1 (strain ATCC 23456 / CCUG 17765 / NCTC 10094 / 16M).